A 675-amino-acid chain; its full sequence is Collagen alpha-3(IX) chain (675 aa).

The signal sequence occupies residues 1–21 (MTVFPTLGLLFLCQLLATTSA). Disordered stretches follow at residues 22–517 (QRVG…KEAS) and 542–660 (KPLS…ICDT). Residues 25-515 (GPQGPPGPRG…TGKPGPPGKE (491 aa)) form a triple-helical region 3 (COL3) region. Composition is skewed to pro residues over residues 27–38 (QGPPGPRGPPGP) and 51–60 (SGLPGPPGPK). Low complexity predominate over residues 62-87 (APGKPGAAGEAGLPGLPGVDGLTGTD). Residues 105-125 (AGPPGPAGKGLPGPPGPPGPS) show a composition bias toward pro residues. The span at 126-135 (GLPGGNGFRG) shows a compositional bias: gly residues. 2 stretches are compositionally biased toward pro residues: residues 136–155 (PPGPSGLPGFPGPPGPPGPP) and 173–184 (LCPPGPPGPPGM). A compositionally biased stretch (low complexity) spans 218-233 (PGSVGLQGPRGLRGLP). A Cell attachment site motif is present at residues 242-244 (RGD). A compositionally biased stretch (basic and acidic residues) spans 301–317 (KDGRDGAPGLDGEKGDA). The segment covering 361–374 (EPGIPGDVGIPGDR) has biased composition (low complexity). N-linked (GlcNAc...) asparagine glycosylation is present at N479. Over residues 481–508 (TAGAPGIPGHPGPMGHQGEQGVPGITGK) the composition is skewed to low complexity. The interval 516 to 546 (ASEQHIRELCGEMINDQIAQLAANLRKPLSP) is nonhelical region 3 (NC3). The triple-helical region 2 (COL2) stretch occupies residues 547 to 626 (GMTGRPGPAG…QGLPGVPGIS (80 aa)). The span at 569–582 (HPGARGPPGYRGPT) shows a compositional bias: low complexity. The Cell attachment site signature appears at 591-593 (RGD). The segment covering 613–624 (DQGPQGLPGVPG) has biased composition (low complexity). Residues 627–631 (KNGRD) form a nonhelical region 2 (NC2) region. The interval 632–658 (GAQGEPGLPGDPGTPGAVGAQGTPGIC) is triple-helical region 1 (COL1). The nonhelical region 1 (NC1) stretch occupies residues 659–675 (DTSACMGAVGASTSKKS).

This sequence belongs to the fibril-associated collagens with interrupted helices (FACIT) family. Trimers composed of three different chains: alpha 1(IX), alpha 2(IX), and alpha 3(IX). Post-translationally, prolines at the third position of the tripeptide repeating unit (G-X-Y) are hydroxylated in some or all of the chains.

It localises to the secreted. The protein localises to the extracellular space. It is found in the extracellular matrix. Collagen type IX is a minor cartilage non-fibrillar collagen. It is associated with type II collagen fibrils. This Gallus gallus (Chicken) protein is Collagen alpha-3(IX) chain (COL9A3).